The chain runs to 632 residues: tRNA uridine 5-carboxymethylaminomethyl modification enzyme MnmG (632 aa).

Residues 15–20 (GAGHAG), I127, and S182 contribute to the FAD site. 276–290 (GPRYCPSIEDKIVRF) is a binding site for NAD(+). Residue Q373 participates in FAD binding.

This sequence belongs to the MnmG family. As to quaternary structure, homodimer. Heterotetramer of two MnmE and two MnmG subunits. FAD is required as a cofactor.

The protein localises to the cytoplasm. Functionally, NAD-binding protein involved in the addition of a carboxymethylaminomethyl (cmnm) group at the wobble position (U34) of certain tRNAs, forming tRNA-cmnm(5)s(2)U34. In Streptococcus pyogenes serotype M6 (strain ATCC BAA-946 / MGAS10394), this protein is tRNA uridine 5-carboxymethylaminomethyl modification enzyme MnmG.